The primary structure comprises 613 residues: Dihydroxy-acid dehydratase (613 aa).

Residue aspartate 81 participates in Mg(2+) binding. Cysteine 122 contacts [2Fe-2S] cluster. Aspartate 123 and lysine 124 together coordinate Mg(2+). An N6-carboxylysine modification is found at lysine 124. Cysteine 195 contributes to the [2Fe-2S] cluster binding site. Residue glutamate 491 coordinates Mg(2+). Residue serine 517 is the Proton acceptor of the active site.

Belongs to the IlvD/Edd family. Homodimer. Requires [2Fe-2S] cluster as cofactor. The cofactor is Mg(2+).

The enzyme catalyses (2R)-2,3-dihydroxy-3-methylbutanoate = 3-methyl-2-oxobutanoate + H2O. It carries out the reaction (2R,3R)-2,3-dihydroxy-3-methylpentanoate = (S)-3-methyl-2-oxopentanoate + H2O. It participates in amino-acid biosynthesis; L-isoleucine biosynthesis; L-isoleucine from 2-oxobutanoate: step 3/4. It functions in the pathway amino-acid biosynthesis; L-valine biosynthesis; L-valine from pyruvate: step 3/4. Functionally, functions in the biosynthesis of branched-chain amino acids. Catalyzes the dehydration of (2R,3R)-2,3-dihydroxy-3-methylpentanoate (2,3-dihydroxy-3-methylvalerate) into 2-oxo-3-methylpentanoate (2-oxo-3-methylvalerate) and of (2R)-2,3-dihydroxy-3-methylbutanoate (2,3-dihydroxyisovalerate) into 2-oxo-3-methylbutanoate (2-oxoisovalerate), the penultimate precursor to L-isoleucine and L-valine, respectively. The chain is Dihydroxy-acid dehydratase from Vibrio vulnificus (strain YJ016).